The chain runs to 260 residues: Snake venom serine protease homolog 2A (260 aa).

A signal peptide spans 1-18 (MVLIRVLANLLILQLSYA). The propeptide occupies 19–24 (QKSSEL). The region spanning 25–251 (IIGGDECNIN…HLDWIKSIIA (227 aa)) is the Peptidase S1 domain. Cystine bridges form between Cys31/Cys165, Cys52/Cys68, Cys100/Cys258, Cys144/Cys212, Cys176/Cys191, and Cys202/Cys227. Asn83, Asn123, and Asn124 each carry an N-linked (GlcNAc...) asparagine glycan.

This sequence belongs to the peptidase S1 family. Snake venom subfamily. As to expression, expressed by the venom gland.

The protein resides in the secreted. Its function is as follows. Snake venom serine protease homolog that may act in the hemostasis system of the prey. The chain is Snake venom serine protease homolog 2A (TLG2A) from Craspedocephalus gramineus (Bamboo pit viper).